We begin with the raw amino-acid sequence, 199 residues long: Holliday junction resolvase RecU (199 aa).

Residues Thr82, Asp84, Glu97, and Gln116 each contribute to the Mg(2+) site.

Belongs to the RecU family. It depends on Mg(2+) as a cofactor.

The protein localises to the cytoplasm. The catalysed reaction is Endonucleolytic cleavage at a junction such as a reciprocal single-stranded crossover between two homologous DNA duplexes (Holliday junction).. Functionally, endonuclease that resolves Holliday junction intermediates in genetic recombination. Cleaves mobile four-strand junctions by introducing symmetrical nicks in paired strands. Promotes annealing of linear ssDNA with homologous dsDNA. Required for DNA repair, homologous recombination and chromosome segregation. The protein is Holliday junction resolvase RecU of Streptococcus pyogenes serotype M1.